The sequence spans 138 residues: 16 kDa phloem protein 2 (138 aa).

A C2 domain is found at 1 to 108 (MGMGMMEVHL…LAEGVRKGWS (108 aa)). D20, D27, D78, D80, and D86 together coordinate Ca(2+).

Ca(2+) serves as cofactor. In terms of tissue distribution, sieve elements of leaves, stems, roots and flowers.

In terms of biological role, binds to both sense and antisense RNA. Interacts with mesophyll plasmodesmata to mediate its own cell-to-cell transport and potentiate RNA trafficking. This chain is 16 kDa phloem protein 2 (PP16-2), found in Cucurbita maxima (Pumpkin).